Reading from the N-terminus, the 141-residue chain is Drosulfakinins (141 aa).

Residues 1-33 (MGLRSCTHLATLFMTLWALAFCFLVVVPIPAQT) form the signal peptide. The propeptide occupies 34 to 73 (TSLQNAKDDRRLQELESKIGAESDQPNANLVGPSFSRFGD). The interval 51 to 72 (KIGAESDQPNANLVGPSFSRFG) is disordered. Phenylalanine 82 is subject to Phenylalanine amide. Residues 86 to 111 (VPLISRPMIPIELDLLMDNDDERTKA) constitute a propeptide that is removed on maturation. At tyrosine 117 the chain carries Sulfotyrosine. Phenylalanine amide is present on phenylalanine 122. Sulfotyrosine is present on tyrosine 134. Phenylalanine 139 bears the Phenylalanine amide mark.

The protein belongs to the gastrin/cholecystokinin family.

The protein localises to the secreted. Functionally, drosulfakinin-0 (DSK 0) plays diverse biological roles including regulating gut muscle contraction in adults but not in larvae. This is Drosulfakinins from Drosophila mauritiana (Fruit fly).